Reading from the N-terminus, the 613-residue chain is Chaperone protein DnaK (613 aa).

The disordered stretch occupies residues 578-613 (MYQSQATQGTSQNSSQNNNSQNNNGDTVDADFKESK). Residues 580–602 (QSQATQGTSQNSSQNNNSQNNNG) show a composition bias toward low complexity.

This sequence belongs to the heat shock protein 70 family.

In terms of biological role, acts as a chaperone. This Picrophilus torridus (strain ATCC 700027 / DSM 9790 / JCM 10055 / NBRC 100828 / KAW 2/3) protein is Chaperone protein DnaK.